The chain runs to 438 residues: Nucleolar protein 12 (438 aa).

Disordered stretches follow at residues 1-28 and 60-94; these read MGETNSSLDNENTSFVGKLSSSSNVDPT and ANGVEEAAETIESDTKEVQNIKPKSKKKKKKLNDS. Residues 60-71 show a composition bias toward acidic residues; that stretch reads ANGVEEAAETIE. Phosphoserine is present on residues serine 94 and serine 95. Residues 108-146 are disordered; that stretch reads AEEDEEKDKDSAGLINDEEDKSPAKQSVLEERTSQEDVK. The span at 135 to 146 shows a compositional bias: basic and acidic residues; that stretch reads VLEERTSQEDVK. RRM domains follow at residues 164 to 262 and 270 to 348; these read KTVF…SVSH and RCVF…RAKS. Basic residues-rich tracts occupy residues 346 to 357 and 402 to 412; these read AKSTKPKSITRS and AKKKVNKKRKE. 2 disordered regions span residues 346-366 and 390-438; these read AKSTKPKSITRSKRGDEKTRT and EGHR…KKDK.

It belongs to the RRM RBM34 family.

Its subcellular location is the nucleus. The protein resides in the nucleolus. Functionally, involved in pre-25S rRNA processing. The polypeptide is Nucleolar protein 12 (nop12) (Schizosaccharomyces pombe (strain 972 / ATCC 24843) (Fission yeast)).